We begin with the raw amino-acid sequence, 725 residues long: Consortin (725 aa).

5 disordered regions span residues 1 to 72 (MDDS…LNNN), 103 to 124 (GKDKKIPGKRSPRSKKGTAKKI), 296 to 353 (LLVS…SLSV), 375 to 397 (TQSSETAGSPSGPDSSEDACEDD), and 485 to 510 (QQPDLTDSDGKSPQAQADSDGSENVL). At 1–664 (MDDSDTPTYY…LDQDEVGGGS (664 aa)) the chain is on the cytoplasmic side. Polar residues predominate over residues 63–72 (VSEQDSLNNN). A compositionally biased stretch (basic residues) spans 109-121 (PGKRSPRSKKGTA). Basic and acidic residues predominate over residues 300–314 (EDPKEGGATTKESES). 2 stretches are compositionally biased toward polar residues: residues 343–353 (DVQTDSPSLSV) and 375–388 (TQSSETAGSPSGPD). The chain crosses the membrane as a helical span at residues 665-685 (CILLVLLCIATVFLSVGGTAL). At 686–725 (YCTFGDMESPVCTDFADNMDFYYTKLLQGVAELKHWIYLS) the chain is on the extracellular side.

The protein belongs to the CNST family. In terms of assembly, interacts with connexins GJA1/CX43, GJB1/CX32, GJB2/CX26, GJB3/CX31, GJB6/CX30 and GJC1/CX45. Also interacts with GGA1 and GGA2. Does not interact with PANX1.

The protein localises to the cell membrane. Its subcellular location is the golgi apparatus. The protein resides in the trans-Golgi network membrane. It is found in the cytoplasmic vesicle. It localises to the secretory vesicle. Functionally, required for targeting of connexins to the plasma membrane. In Homo sapiens (Human), this protein is Consortin (CNST).